Consider the following 163-residue polypeptide: MMPGQIPDPSVTAGSLPGLGPLTGLPSSALTTEELKYADIRNIGAMIAPLHFLEVKLGKRPQPVKSELDEEEERRKRRREKNKVAAARCRNKKKERTEFLQRESERLELMNAELKTQIEELKLERQQLILMLNRHRPTCIVRTDSVRTPESEGNPLLEQLDKK.

Disordered regions lie at residues 1 to 20 (MMPG…PGLG) and 59 to 89 (KRPQ…AARC). A Glycyl lysine isopeptide (Lys-Gly) (interchain with G-Cter in SUMO2) cross-link involves residue lysine 65. One can recognise a bZIP domain in the interval 72 to 135 (EERRKRRREK…QQLILMLNRH (64 aa)). A basic motif region spans residues 74–96 (RRKRRREKNKVAAARCRNKKKER). A leucine-zipper region spans residues 100–128 (LQRESERLELMNAELKTQIEELKLERQQL). Residue threonine 148 is modified to Phosphothreonine; by MAPK8.

This sequence belongs to the bZIP family. ATF subfamily. In terms of assembly, forms a homodimer or heterodimer with JUN, JUNB, JUND, CEBPG and ATF2 thereby inhibiting transactivation by JUN, ATF2 and CEBPG. Binds multiple DNA elements such as cAMP-response element (CRE) and TPA response element (TRE) either as homodimer or heterodimer. Interacts with IRF2BP1. Post-translationally, phosphorylation of Thr-148 by MAPK8 in response to different stress conditions such as, UV irradiation, oxidatives stress and anisomycin treatments. Polyubiquitinated; probably by IRF2BP1. Ubiquitously expressed in all adult tissues tested as well in embryos.

It localises to the nucleus. Component of the AP-1 transcription factor that represses transactivation mediated by the Jun family of proteins. Involved in a variety of transcriptional responses associated with AP-1, such as UV-induced apoptosis, cell differentiation, tumorigenesis and antitumogeneris. Can also function as a repressor by recruiting histone deacetylase 3/HDAC3 to the promoter region of JUN. May control transcription via direct regulation of the modification of histones and the assembly of chromatin. The polypeptide is Jun dimerization protein 2 (Jdp2) (Mus musculus (Mouse)).